Here is a 384-residue protein sequence, read N- to C-terminus: MIWQEKIDAALDARRVADALRRRYPVAQGAGRWLVADDCQYLNFSSNDYLGLSHHPQIIRAWQQGADQFGVGSGGSGHVSGYSVAHQVLEEELAEWLGYSRALLFISGFAANQAVIAAMMAKEDRIVADRLSHASLLEAASLSPSPLRRFAHNDVTHLARLLASPCPGQQLVVTEGVFSMDGDSAPLEEIQQVTQQHDGWLMVDDAHGTGVIGEQGRGSCWLQKVKPELLVVTFGKGFGVSGAAVLCSNTVADYLLQFARHLIYSTSMPPAQAQALRASLAVIRSDEGDARREKLAALITRFRAGVQDLPFTLAGSCSAIQPLIVGDNSRALQLAEKLRQQGCWVTAIRPPTVPAGTARLRLTLTAAHEMQDIDRLLEVLHGNG.

Position 21 (Arg21) interacts with substrate. 108 to 109 is a binding site for pyridoxal 5'-phosphate; that stretch reads GF. His133 is a binding site for substrate. Ser179, His207, and Thr233 together coordinate pyridoxal 5'-phosphate. N6-(pyridoxal phosphate)lysine is present on Lys236. Thr352 contacts substrate.

It belongs to the class-II pyridoxal-phosphate-dependent aminotransferase family. BioF subfamily. As to quaternary structure, homodimer. The cofactor is pyridoxal 5'-phosphate.

It catalyses the reaction 6-carboxyhexanoyl-[ACP] + L-alanine + H(+) = (8S)-8-amino-7-oxononanoate + holo-[ACP] + CO2. It functions in the pathway cofactor biosynthesis; biotin biosynthesis. Functionally, catalyzes the decarboxylative condensation of pimeloyl-[acyl-carrier protein] and L-alanine to produce 8-amino-7-oxononanoate (AON), [acyl-carrier protein], and carbon dioxide. This chain is 8-amino-7-oxononanoate synthase, found in Escherichia coli (strain UTI89 / UPEC).